The following is a 433-amino-acid chain: Ribulose bisphosphate carboxylase/oxygenase activase, chloroplastic (433 aa).

Over residues 1–20 (MAAAFSSTVGAPASTPTRSS) the composition is skewed to polar residues. Residues 1–53 (MAAAFSSTVGAPASTPTRSSFLGKKLNKPQVSAAVTYHGKSSSSNSRFKAMAA) constitute a chloroplast transit peptide. The disordered stretch occupies residues 1-60 (MAAAFSSTVGAPASTPTRSSFLGKKLNKPQVSAAVTYHGKSSSSNSRFKAMAAKEVDETK). 161 to 168 (GGKGQGKS) provides a ligand contact to ATP.

The protein belongs to the RuBisCO activase family.

The protein resides in the plastid. Its subcellular location is the chloroplast stroma. Functionally, activation of RuBisCO (ribulose-1,5-bisphosphate carboxylase/oxygenase; EC 4.1.1.39) involves the ATP-dependent carboxylation of the epsilon-amino group of lysine leading to a carbamate structure. This chain is Ribulose bisphosphate carboxylase/oxygenase activase, chloroplastic (RCA1), found in Zea mays (Maize).